We begin with the raw amino-acid sequence, 402 residues long: MKRLWQHCHAATLRNGKYSIVEDAVLVTDGPLIHWIGPRAELPPGDYAERIDLGGAWLTPGLIDCHTHAVFGGNRSGEFEQRLEGVSYAEIATAGGGIASTVRATREASEEELLASARKRLDPLLRDGVTALEIKSGYGLDLASEAKMLRVIRRLGEQLPATVRSTCLAAHALPPEYAGRADDYIGHVCTTILPALAKEGLVDAVDAFCEHLAFSPAQVERVFIAARELGLPVKLHAEQLSSLHGSSLAARYQALSADHLEYMTEEDARAMGAAGTVAVLLPGAFYLLRETRLPPIDALRRHGVAMAVASDLNPGTSPALSLRLMLNMACTLFRLTPEEALAGVTLHAARALGLEASHGSLEAGKLADFVAWEIERPAELAYWLGGDLPKRVIRHAEEVYRG.

Fe(3+) is bound by residues His66 and His68. Zn(2+) is bound by residues His66 and His68. 4-imidazolone-5-propanoate is bound by residues Arg75, Tyr138, and His171. Tyr138 lines the N-formimidoyl-L-glutamate pocket. His236 is a Fe(3+) binding site. Residue His236 coordinates Zn(2+). A 4-imidazolone-5-propanoate-binding site is contributed by Gln239. Asp311 contacts Fe(3+). Position 311 (Asp311) interacts with Zn(2+). 2 residues coordinate N-formimidoyl-L-glutamate: Asn313 and Gly315. Thr316 contacts 4-imidazolone-5-propanoate.

It belongs to the metallo-dependent hydrolases superfamily. HutI family. Zn(2+) is required as a cofactor. It depends on Fe(3+) as a cofactor.

The protein resides in the cytoplasm. The catalysed reaction is 4-imidazolone-5-propanoate + H2O = N-formimidoyl-L-glutamate. It participates in amino-acid degradation; L-histidine degradation into L-glutamate; N-formimidoyl-L-glutamate from L-histidine: step 3/3. Its function is as follows. Catalyzes the hydrolytic cleavage of the carbon-nitrogen bond in imidazolone-5-propanoate to yield N-formimidoyl-L-glutamate. It is the third step in the universal histidine degradation pathway. The protein is Imidazolonepropionase of Pseudomonas paraeruginosa (strain DSM 24068 / PA7) (Pseudomonas aeruginosa (strain PA7)).